The chain runs to 604 residues: Kinesin-like protein KIN-14O (604 aa).

A coiled-coil region spans residues Met-22 to Lys-61. The region spanning Ser-63–Ile-387 is the Kinesin motor domain. Gly-141–Thr-148 contributes to the ATP binding site. The stretch at Arg-383–Ala-443 forms a coiled coil. Disordered regions lie at residues Asp-465–Leu-511 and Ser-565–Thr-604. Residues Ser-565–Ala-574 show a composition bias toward polar residues. Over residues Leu-593–Thr-604 the composition is skewed to basic residues.

It belongs to the TRAFAC class myosin-kinesin ATPase superfamily. Kinesin family. KIN-14 subfamily.

This chain is Kinesin-like protein KIN-14O, found in Oryza sativa subsp. japonica (Rice).